Reading from the N-terminus, the 309-residue chain is Taste receptor type 2 member 43 (309 aa).

Position 1 (M1) is a topological domain, extracellular. The helical transmembrane segment at I2–F22 threads the bilayer. Residues A23–Q46 are Cytoplasmic-facing. Residues I47 to Y67 traverse the membrane as a helical segment. Residues L68–N86 are Extracellular-facing. The helical transmembrane segment at I87–L107 threads the bilayer. The Cytoplasmic segment spans residues L108–K126. The helical transmembrane segment at S127–I147 threads the bilayer. Residues N148–T178 lie on the Extracellular side of the membrane. N-linked (GlcNAc...) asparagine glycans are attached at residues N161 and N176. A helical transmembrane segment spans residues V179–I199. Residues C200–Q229 lie on the Cytoplasmic side of the membrane. The chain crosses the membrane as a helical span at residues T230–W250. Topologically, residues S251 to P259 are extracellular. A helical transmembrane segment spans residues V260–I280. Residues W281–P309 are Cytoplasmic-facing.

The protein belongs to the G-protein coupled receptor T2R family.

The protein resides in the membrane. It localises to the cell projection. It is found in the cilium membrane. Its function is as follows. Gustducin-coupled receptor immplicated in the perception of bitter compounds in the oral cavity and the gastrointestinal tract. Signals through PLCB2 and the calcium-regulated cation channel TRPM5. Activated by the sulfonyl amide sweeteners saccharin and acesulfame K. In airway epithelial cells, binding of bitter compounds increases the intracellular calcium ion concentration and stimulates ciliary beat frequency. May act as chemosensory receptors in airway epithelial cells to detect and eliminate potential noxious agents from the airways. This chain is Taste receptor type 2 member 43 (TAS2R43), found in Pan paniscus (Pygmy chimpanzee).